Consider the following 162-residue polypeptide: Selenoprotein F (162 aa).

A signal peptide spans Met-1–Ala-28. Sec-93 is a non-standard amino acid (selenocysteine).

Belongs to the selenoprotein M/F family. As to quaternary structure, forms a tight complex with UGGT1/UGCGL1. Interacts with UGGT2/UGCGL2. Interacts with RDH11.

The protein localises to the endoplasmic reticulum lumen. In terms of biological role, may be involved in redox reactions associated with the formation of disulfide bonds. May contribute to the quality control of protein folding in the endoplasmic reticulum. May regulate protein folding by enhancing the catalytic activity of UGGT1/UGCGL1 and UGGT2/UGCGL2. This chain is Selenoprotein F, found in Sus scrofa (Pig).